A 257-amino-acid chain; its full sequence is Acetylglutamate kinase (257 aa).

Substrate-binding positions include 43–44 (GG), Arg-65, and Asn-157.

The protein belongs to the acetylglutamate kinase family. ArgB subfamily.

The protein resides in the cytoplasm. It catalyses the reaction N-acetyl-L-glutamate + ATP = N-acetyl-L-glutamyl 5-phosphate + ADP. It functions in the pathway amino-acid biosynthesis; L-arginine biosynthesis; N(2)-acetyl-L-ornithine from L-glutamate: step 2/4. In terms of biological role, catalyzes the ATP-dependent phosphorylation of N-acetyl-L-glutamate. The polypeptide is Acetylglutamate kinase (Actinobacillus succinogenes (strain ATCC 55618 / DSM 22257 / CCUG 43843 / 130Z)).